The sequence spans 2496 residues: Hornerin (2496 aa).

An S-100-like region spans residues 1–81 (MPKLLESIVT…TEYLLMILKL (81 aa)). EF-hand domains are found at residues 13–48 (DVFYQYATEYGNCDMLSKEEMKELLVTEFHQILKNP) and 49–84 (DDPDTVDIIMQNLDRDHNHKVDFTEYLLMILKLTKA). Ca(2+)-binding residues include M27, E32, D62, D64, N66, K68, and E73. The segment at 82-98 (TKACNKIIGKDYCQASG) is s (spacer). Positions 97 to 2496 (SGSKQKNHSH…SGQTSGCGSG (2400 aa)) are disordered. One copy of the 1; truncated repeat lies at 99–145 (SKQKNHSHQHQEEQSKKETENKEQKGSISSSAGENDSYSRGSRGSNK). The span at 107 to 123 (QHQEEQSKKETENKEQK) shows a compositional bias: basic and acidic residues. Polar residues predominate over residues 124–134 (GSISSSAGEND). Basic residues predominate over residues 144-153 (NKSKSKKLRK). 27 tandem repeats follow at residues 146–231 (SKSK…NGKH), 232–321 (GSSS…FGSS), 326–400 (SGQS…SEQY), 401–491 (GASS…SCCG), 492–577 (QSSG…SGRY), 578–668 (GASS…SGSR), 669–748 (HGSG…SGRC), 749–839 (GASS…SCCG), 840–926 (QSSG…SGRY), 927–1017 (GASS…SGSR), 1018–1097 (HGSG…SGRC), 1098–1188 (GASS…SCCG), 1189–1274 (QSSG…SGRY), 1275–1365 (GASS…SGSR), 1366–1445 (HGSG…SGRC), 1446–1536 (GASS…SCCG), 1537–1622 (QSSG…SGRY), 1623–1713 (GASS…SGSR), 1714–1793 (HGSG…SGRC), 1794–1884 (GASS…SCCG), 1885–1970 (QSSG…SGRY), 1971–2061 (GASS…SGSR), 2062–2141 (HGSG…SGRC), 2142–2232 (GASS…SGSR), 2233–2312 (HGSG…SGRY), 2313–2403 (GASS…SGSR), and 2410–2496 (QFPI…CGSG). 3 stretches are compositionally biased toward low complexity: residues 183-194 (SGFSNSSGNGRP), 200-246 (SGFP…SGHS), and 270-286 (RESSGSQEYSSGSSEEP). Composition is skewed to polar residues over residues 294–319 (RKNSSTCGKNGSYSGQSTGRHQQGFG) and 326–355 (SGQSITSANHGSHSNQSSCSGTRECGSSES). 3 stretches are compositionally biased toward low complexity: residues 362-379 (VSGSGHSSSTGKYTSTSG), 394-415 (SSGSEQYGASSGQSSGCSSGQS), and 423-448 (SGSRNSSTQSRGRSTSRESSTSQQFG). The segment covering 449–464 (SGSGRSSGFSQGGSGQ) has biased composition (gly residues). Residues 465–565 (GRSSRGGQQG…GQTSSSTRQG (101 aa)) show a composition bias toward low complexity. Phosphoserine is present on residues S506 and S508. The segment covering 566–576 (SGQGQASGSGR) has biased composition (gly residues). Low complexity-rich tracts occupy residues 577–593 (YGASSGQTSGCGSGQST) and 600–625 (SGSRNSSTQSRGRSTSRESSTSQRYG). A compositionally biased stretch (gly residues) spans 626-641 (SGSGESSGFSQGGSGQ). 2 stretches are compositionally biased toward low complexity: residues 642–670 (GRSSRGGQQGSFSGQTSGRSQHQSGSRHG) and 679–713 (SGQQGSHHGHSSSSGTHNSGSSQSSSTQWSHGSGS). At R646 the chain carries Omega-N-methylarginine. At S716 the chain carries Phosphoserine. Over residues 723 to 736 (GSTSGQTASSTRQG) the composition is skewed to low complexity. Over residues 737 to 747 (SGQGQASGSGR) the composition is skewed to gly residues. Low complexity-rich tracts occupy residues 748-764 (CGASSGQTSGCGSGQST), 771-796 (SGSRNSSTQSRGRSTSRESSTSQRFG), 804-884 (GFSQ…SRPA), and 891-914 (SGRSSGLGQYGSPSGQTSSSTRQG). S815 is subject to Phosphoserine. Positions 915–925 (SGQGQASGSGR) are enriched in gly residues. Composition is skewed to low complexity over residues 926-942 (YGASSGQTSGCGSGQST) and 949-974 (SGSRNSSTQSRGRSTSRESSTSQRYG). Residues 975-990 (SGSGESSGFSQGGSGQ) show a composition bias toward gly residues. Composition is skewed to low complexity over residues 991–1019 (GRSSRGGQQGSFSGQTSGRSQHQSGSRHG), 1028–1062 (SGQQGSHHGHSSSSGTHNSGSSQSSSTQWSHGSGS), and 1072–1085 (GSTSGQTASSTRQG). R995 is subject to Omega-N-methylarginine. Gly residues predominate over residues 1086 to 1096 (SGQGQASGSGR). Low complexity-rich tracts occupy residues 1097–1113 (CGASSGQTSGCGSGQST), 1120–1145 (SGSRNSSTQSRGRSTSRESSTSQRFG), and 1153–1262 (GFSQ…TRQG). The residue at position 1229 (S1229) is a Phosphoserine. The span at 1263-1273 (SGQGQASGSGR) shows a compositional bias: gly residues. Residues 1281–1292 (TSGCRSGQSTRY) show a composition bias toward polar residues. The segment covering 1298-1322 (GSRNSSTQSRGRSTSRESSTSQRYG) has biased composition (low complexity). A compositionally biased stretch (gly residues) spans 1323–1338 (SGSGESSGFSQGGSGQ). Low complexity-rich tracts occupy residues 1339–1367 (GRSSRGGQQGSFSGQTSGRNQHQSGSRHG), 1376–1410 (SGQQGSHHGHSSSSGTHNSGSSQSSSTQWSHGSGS), and 1420–1433 (GSTSGQTASSTRQG). R1343 is modified (omega-N-methylarginine). The span at 1434–1444 (SGQGQASGSGR) shows a compositional bias: gly residues. Low complexity-rich tracts occupy residues 1445–1461 (CGASSGQTSGCGSGQST), 1468–1493 (SGSRNSSTQSRGRSTSRESSTSQRFG), and 1501–1610 (GFSQ…TRQG). A phosphoserine mark is found at S1551 and S1553. Over residues 1611–1621 (SGQGQASGSGR) the composition is skewed to gly residues. Composition is skewed to low complexity over residues 1622–1631 (YGASSGQTSG) and 1645–1670 (SGSRNSSTQSRGRSTSRESSTSQRCG). At S1650 the chain carries Phosphoserine. Over residues 1671-1686 (SGSGESSGFSQGGSGQ) the composition is skewed to gly residues. 3 stretches are compositionally biased toward low complexity: residues 1687-1715 (GRSSRGGQQGSFSGQTSGRSQHQSGSRHG), 1724-1758 (SGQQGSHHGHSSSSGTHNSGSSQSSSTQWSHGSGS), and 1768-1781 (GSTSGQTASSTRQG). Omega-N-methylarginine is present on R1691. A compositionally biased stretch (gly residues) spans 1782-1792 (SGQGQASGSGR). Residues 1800-1811 (TSGCGSDQSTRY) show a composition bias toward polar residues. 2 stretches are compositionally biased toward low complexity: residues 1816–1841 (SGSRNSSTQSRGRSTSRESSTSQRFG) and 1849–1958 (GFSQ…TRQG). The segment covering 1959-1969 (SGQGQASGSGR) has biased composition (gly residues). 2 stretches are compositionally biased toward low complexity: residues 1970 to 1986 (YGASSGQTSGCGSGQST) and 1993 to 2018 (SGSRNSSTQSRGRSTSRESSTSQRYG). S2011 is subject to Phosphoserine. The segment covering 2019 to 2034 (SGSGESSGFSQGGSGQ) has biased composition (gly residues). Composition is skewed to low complexity over residues 2035–2063 (GRSSRGGQQGSFSGQTSGRSQHQSGSRHG) and 2072–2106 (SGQQGSHHGHSSSSGTHNSGSSQSSSTQWSHGSGS). R2039 is modified (omega-N-methylarginine). S2109 and S2124 each carry phosphoserine. The span at 2116–2129 (GSTSGQTASSTRQG) shows a compositional bias: low complexity. A compositionally biased stretch (gly residues) spans 2130–2140 (SGQGQASGSGR). Composition is skewed to low complexity over residues 2141 to 2157 (CGASSGQTSGCGSGQST) and 2164 to 2189 (SGSRNSSTQSRGRSTSRESSTSQRYG). Gly residues predominate over residues 2190-2205 (SGSGESSGFSQGGSGQ). 2 stretches are compositionally biased toward low complexity: residues 2206 to 2234 (GRSSRGGQQGSFSGQTSGRSQHQSGSRHG) and 2243 to 2300 (SGQQ…TRQG). The residue at position 2210 (R2210) is an Omega-N-methylarginine. Gly residues predominate over residues 2301 to 2311 (SGQGQASGSGR). Composition is skewed to low complexity over residues 2312-2328 (YGASSGQTSGCGSGQST) and 2335-2360 (SGSRNSSTQSRGRSTSRESSTSQRYG). The residue at position 2353 (S2353) is a Phosphoserine. The span at 2361–2376 (SGSGESSGFSQGGSGQ) shows a compositional bias: gly residues. Composition is skewed to low complexity over residues 2377-2405 (GRSSRGGQQGSFSGQTSGRSQHQSGSRHG), 2414-2448 (SGQQGSHHGHSSSSGTHNSGSSQSSSTQWSHGSGS), and 2458-2471 (GSTSGQTASSTRQG). The residue at position 2381 (R2381) is an Omega-N-methylarginine. Positions 2472–2482 (SGQGQASGSGR) are enriched in gly residues.

It belongs to the S100-fused protein family. This sequence in the N-terminal section; belongs to the S-100 family. In terms of processing, processed during the process of epidermal differentiation. Forms covalent cross-links mediated by transglutaminase TGM3, between glutamine and the epsilon-amino group of lysine residues (in vitro). Embryonic skin. Highest level in the adult forestomach followed by the skin. Lower levels in the tongue, esophagus. Detected in the granular and cornified layers of the mature epidermis.

It localises to the cytoplasmic granule. Its function is as follows. Component of the epidermal cornified cell envelopes. This is Hornerin (Hrnr) from Mus musculus (Mouse).